We begin with the raw amino-acid sequence, 375 residues long: CCA-adding enzyme (375 aa).

Residues Gly8 and Arg11 each coordinate ATP. The CTP site is built by Gly8 and Arg11. Asp21 and Asp23 together coordinate Mg(2+). 3 residues coordinate ATP: Arg91, Arg137, and Arg140. 3 residues coordinate CTP: Arg91, Arg137, and Arg140.

It belongs to the tRNA nucleotidyltransferase/poly(A) polymerase family. Bacterial CCA-adding enzyme type 2 subfamily. Mg(2+) serves as cofactor.

It carries out the reaction a tRNA precursor + 2 CTP + ATP = a tRNA with a 3' CCA end + 3 diphosphate. The enzyme catalyses a tRNA with a 3' CCA end + 2 CTP + ATP = a tRNA with a 3' CCACCA end + 3 diphosphate. Functionally, catalyzes the addition and repair of the essential 3'-terminal CCA sequence in tRNAs without using a nucleic acid template. Adds these three nucleotides in the order of C, C, and A to the tRNA nucleotide-73, using CTP and ATP as substrates and producing inorganic pyrophosphate. tRNA 3'-terminal CCA addition is required both for tRNA processing and repair. Also involved in tRNA surveillance by mediating tandem CCA addition to generate a CCACCA at the 3' terminus of unstable tRNAs. While stable tRNAs receive only 3'-terminal CCA, unstable tRNAs are marked with CCACCA and rapidly degraded. This is CCA-adding enzyme from Pseudomonas entomophila (strain L48).